Reading from the N-terminus, the 253-residue chain is Ribonuclease HII (253 aa).

Residues proline 70–leucine 253 enclose the RNase H type-2 domain. 3 residues coordinate a divalent metal cation: aspartate 76, glutamate 77, and aspartate 168.

Belongs to the RNase HII family. It depends on Mn(2+) as a cofactor. Mg(2+) is required as a cofactor.

It is found in the cytoplasm. It catalyses the reaction Endonucleolytic cleavage to 5'-phosphomonoester.. Endonuclease that specifically degrades the RNA of RNA-DNA hybrids. This chain is Ribonuclease HII, found in Latilactobacillus sakei subsp. sakei (strain 23K) (Lactobacillus sakei subsp. sakei).